Consider the following 1074-residue polypeptide: DNA-directed RNA polymerase subunit beta (1074 aa).

Belongs to the RNA polymerase beta chain family. In plastids the minimal PEP RNA polymerase catalytic core is composed of four subunits: alpha, beta, beta', and beta''. When a (nuclear-encoded) sigma factor is associated with the core the holoenzyme is formed, which can initiate transcription.

The protein resides in the plastid. The protein localises to the chloroplast. The catalysed reaction is RNA(n) + a ribonucleoside 5'-triphosphate = RNA(n+1) + diphosphate. Functionally, DNA-dependent RNA polymerase catalyzes the transcription of DNA into RNA using the four ribonucleoside triphosphates as substrates. The protein is DNA-directed RNA polymerase subunit beta of Chara vulgaris (Common stonewort).